Here is a 307-residue protein sequence, read N- to C-terminus: Glutaminase (307 aa).

Substrate contacts are provided by S66, N117, E161, N168, Y192, Y243, and V261.

This sequence belongs to the glutaminase family. Homotetramer.

The enzyme catalyses L-glutamine + H2O = L-glutamate + NH4(+). In Serratia proteamaculans (strain 568), this protein is Glutaminase.